We begin with the raw amino-acid sequence, 282 residues long: 4-diphosphocytidyl-2-C-methyl-D-erythritol kinase (282 aa).

K9 is an active-site residue. Residue 98-108 (PMGGGLGGGSS) coordinates ATP. D140 is a catalytic residue.

The protein belongs to the GHMP kinase family. IspE subfamily. In terms of assembly, homodimer.

It catalyses the reaction 4-CDP-2-C-methyl-D-erythritol + ATP = 4-CDP-2-C-methyl-D-erythritol 2-phosphate + ADP + H(+). It participates in isoprenoid biosynthesis; isopentenyl diphosphate biosynthesis via DXP pathway; isopentenyl diphosphate from 1-deoxy-D-xylulose 5-phosphate: step 3/6. In terms of biological role, catalyzes the phosphorylation of the position 2 hydroxy group of 4-diphosphocytidyl-2C-methyl-D-erythritol. The protein is 4-diphosphocytidyl-2-C-methyl-D-erythritol kinase of Salmonella agona (strain SL483).